Here is a 330-residue protein sequence, read N- to C-terminus: Cobalamin biosynthesis protein CobD (330 aa).

Helical transmembrane passes span 60 to 80, 153 to 173, 227 to 247, and 308 to 328; these read TLVI…PPIV, GIIA…LLGV, LGIV…WKIF, and IVLF…FVLT.

The protein belongs to the CobD/CbiB family.

It is found in the cell membrane. It functions in the pathway cofactor biosynthesis; adenosylcobalamin biosynthesis. Functionally, converts cobyric acid to cobinamide by the addition of aminopropanol on the F carboxylic group. In Desulfotalea psychrophila (strain LSv54 / DSM 12343), this protein is Cobalamin biosynthesis protein CobD.